The sequence spans 75 residues: Putative defensin-like protein 55 (75 aa).

Residues 1 to 19 (MNITKAYVIFFLVVILTNS) form the signal peptide. 4 cysteine pairs are disulfide-bonded: Cys39–Cys73, Cys43–Cys66, Cys52–Cys71, and Cys56–Cys72.

The protein belongs to the DEFL family.

It is found in the secreted. The protein is Putative defensin-like protein 55 of Arabidopsis thaliana (Mouse-ear cress).